The following is a 365-amino-acid chain: Neutral protease 2 homolog mep20 (365 aa).

The first 19 residues, 1–19 (MKVTILASAILALINGALA), serve as a signal peptide directing secretion. The propeptide occupies 20-172 (LPANTPTLDV…PQAIKLLDRR (153 aa)). N-linked (GlcNAc...) asparagine glycosylation is present at Asn73. 2 disulfide bridges follow: Cys178/Cys249 and Cys256/Cys274. Position 299 (His299) interacts with Zn(2+). Glu300 is an active-site residue. His303 and Asp314 together coordinate Zn(2+). The N-linked (GlcNAc...) asparagine glycan is linked to Asn351.

Belongs to the peptidase M35 family. It depends on Zn(2+) as a cofactor.

It localises to the secreted. The enzyme catalyses Preferential cleavage of bonds with hydrophobic residues in P1'. Also 3-Asn-|-Gln-4 and 8-Gly-|-Ser-9 bonds in insulin B chain.. In terms of biological role, secreted metalloproteinase that allows assimilation of proteinaceous substrates. Shows high activities on basic nuclear substrates such as histone and protamine. May be involved in virulence. This Aspergillus fumigatus (Neosartorya fumigata) protein is Neutral protease 2 homolog mep20 (mep20).